Consider the following 239-residue polypeptide: Small ribosomal subunit protein uS2c (239 aa).

It belongs to the universal ribosomal protein uS2 family.

Its subcellular location is the plastid. The protein localises to the organellar chromatophore. The protein is Small ribosomal subunit protein uS2c (rps2) of Paulinella chromatophora.